The chain runs to 312 residues: GDP-L-fucose synthase (312 aa).

11 to 17 (GGRGMVG) contributes to the NADP(+) binding site. The active-site Proton donor/acceptor is tyrosine 136. NADP(+)-binding residues include lysine 140 and histidine 179. The substrate site is built by lysine 187, tryptophan 202, and arginine 209.

The protein belongs to the NAD(P)-dependent epimerase/dehydratase family. Fucose synthase subfamily.

The catalysed reaction is GDP-beta-L-fucose + NADP(+) = GDP-4-dehydro-alpha-D-rhamnose + NADPH + H(+). Its pathway is nucleotide-sugar biosynthesis; GDP-L-fucose biosynthesis via de novo pathway; GDP-L-fucose from GDP-alpha-D-mannose: step 2/2. Its function is as follows. Catalyzes the two-step NADP-dependent conversion of GDP-4-dehydro-6-deoxy-D-mannose to GDP-fucose, involving an epimerase and a reductase reaction. This Azorhizobium caulinodans (strain ATCC 43989 / DSM 5975 / JCM 20966 / LMG 6465 / NBRC 14845 / NCIMB 13405 / ORS 571) protein is GDP-L-fucose synthase.